The following is a 369-amino-acid chain: MLVRNICKFTQVMGRFRVVVNPRDYCHLAPLKRSRYHQRSEFGCRPLCSNAAGYEVSWAAPPASGSSGGMFWAFSAAFTLNLFGGADEKEETPEEKLIKTIKRSILCIQREQYDKAEQMLHLALRMAQDIQSKDGITYVFDLMANLAMEREQFKKAEKIFTDVMKRLFAEGHTEESPKILHISSKIAHMSQLQGDLEKSFQGFTWTLQQLAKLLEKMPDDKDILELYGLTKNWFGQLLMKQGKYLEAKNLFKEAFDTLINVYGAVNDASVTILNNISVAYVNLEKYAEARETLLEAMELTKELKDATQEGILQANLGLVYLREGLMSQAENACRLAWKLGKQHQNPDAVEQAEYCLNEIKTTLNGEKRQ.

5 TPR repeats span residues 97–130, 137–170, 228–261, 270–303, and 310–343; these read LIKT…AQDI, TYVF…LFAE, GLTK…LINV, VTIL…TKEL, and GILQ…GKQH.

This sequence belongs to the TTC19 family.

It localises to the mitochondrion. Required for mitochondrial complex III formation. This is Tetratricopeptide repeat protein 19 homolog, mitochondrial (Ttc19) from Drosophila melanogaster (Fruit fly).